The chain runs to 277 residues: Orotidine 5'-phosphate decarboxylase (277 aa).

Residues Asp40, 62–64 (KTH), 93–102 (DRKFIDIGNT), Tyr229, and Arg247 contribute to the substrate site. Lys95 (proton donor) is an active-site residue.

The protein belongs to the OMP decarboxylase family.

The enzyme catalyses orotidine 5'-phosphate + H(+) = UMP + CO2. It functions in the pathway pyrimidine metabolism; UMP biosynthesis via de novo pathway; UMP from orotate: step 2/2. In Aspergillus awamori (Black koji mold), this protein is Orotidine 5'-phosphate decarboxylase (pyrG).